Consider the following 165-residue polypeptide: Protein AIG2 C (165 aa).

14–19 (YGSILE) serves as a coordination point for substrate. Catalysis depends on Glu82, which acts as the Proton acceptor.

The protein belongs to the gamma-glutamylcyclotransferase family. As to expression, expressed in floral organs, leaves, stems and roots.

Putative gamma-glutamylcyclotransferase. The chain is Protein AIG2 C from Arabidopsis thaliana (Mouse-ear cress).